Consider the following 133-residue polypeptide: Minor spike protein H (133 aa).

It belongs to the microviridae H protein family.

Its subcellular location is the virion. Functionally, probably triggers with protein G the injection of the phage DNA into the host upon conformational changes induced by virus-host receptor interaction. This chain is Minor spike protein H, found in Spiroplasma virus 4 (SpV4).